A 707-amino-acid polypeptide reads, in one-letter code: U-box domain-containing protein 2 (707 aa).

The 75-residue stretch at 239–313 (RVPSDFRCSL…ASWCETNNVY (75 aa)) folds into the U-box domain. ARM repeat units lie at residues 453–492 (TDNR…NLSI), 494–534 (DNNK…SLSV), 536–575 (EEYK…NLSI), 577–615 (HENK…NLAT), and 617–656 (REGK…QLCT).

It catalyses the reaction S-ubiquitinyl-[E2 ubiquitin-conjugating enzyme]-L-cysteine + [acceptor protein]-L-lysine = [E2 ubiquitin-conjugating enzyme]-L-cysteine + N(6)-ubiquitinyl-[acceptor protein]-L-lysine.. The protein operates within protein modification; protein ubiquitination. In terms of biological role, functions as an E3 ubiquitin ligase. The protein is U-box domain-containing protein 2 (PUB2) of Arabidopsis thaliana (Mouse-ear cress).